The chain runs to 492 residues: Alpha/beta hydrolase ucsC (492 aa).

The Nucleophile role is filled by S258.

This sequence belongs to the AB hydrolase superfamily. FUS2 hydrolase family. As to quaternary structure, homodimer.

Its pathway is mycotoxin biosynthesis. Alpha/beta hydrolase; part of the gene cluster that mediates the biosynthesis of UCS1025A, a member of the pyrrolizidinone family that acts as a strong telomerase inhibitor and displays potent antibacterial and antitumor properties. These compounds share a hemiaminal-containing pyrrolizidinone core fused with a gamma-lactone, giving a furopyrrolizidine that is connected to a decalin fragment. The polyketide synthase module (PKS) of the PKS-NRPS ucsA is responsible for the synthesis of the polyketide backbone via the condensation of an acetyl-CoA starter unit with 6 malonyl-CoA units. The downstream nonribosomal peptide synthetase (NRPS) module then amidates the carboxyl end of the polyketide with a 2S,3S-methylproline derived from L-isoleucine by the 2-oxoglutarate-dependent dioxygenase ucsF which converts L-isoleucine to (4S,5S)-4-methylpyrroline-5-carboxylate that is further converted to 2S,3S-methylproline by the pyrroline-5-carboxylate reductase ucsG. Reductive release of the completed aminoacyl polyketide from the assembly line can form the 3-pyrrolin-2-one structure via an intramolecular Knoevenagel reaction. Because ucsA lacks a designated enoylreductase (ER) domain, the required activity is provided the enoyl reductase ucsL. This keto acyclic precursor is the substrate of the Diels-Alderase ucsH, that catalyzes the Diels-Alder cycloaddition. Oxidation of the 3S-methyl group to a carboxylate by the cytochrome P450 monooxygenase ucsK allows an oxa-Michael cyclization that might involve the reductase/dehydrogenase ucsI and which furnishes the furopyrrolizidine. The oxidase ucsJ likely plays a critical role in stereoselective reduction of the C5-C6 double bond to afford the required R-configured carboxylate group. Further enolization and oxidation at C5 by an unidentified enzyme affords the last intermediate that can undergo oxa-Michael cyclization to yield UCS1025A. This Acremonium sp protein is Alpha/beta hydrolase ucsC.